The sequence spans 545 residues: Sphingomyelin phosphodiesterase 5 (545 aa).

Residues 1–35 (MSLRESPFPNGFLEGLHAVGWGLIFPCFWFLDRLI) constitute a mitochondrion transit peptide. Residues 36–64 (AVCISTTLERMWRLEQECYLHPLKVVFGS) lie on the Mitochondrial matrix side of the membrane. Residues 65-85 (ILFFILFVISTPFALLGFILW) traverse the membrane as a helical; Signal-anchor for type II membrane protein segment. Over 86–545 (APLQAIRRPF…LSVSLDSEQN (460 aa)) the chain is Mitochondrial intermembrane. E258 provides a ligand contact to Mg(2+). H529 functions as the Proton acceptor in the catalytic mechanism.

It belongs to the neutral sphingomyelinase family. It depends on Mg(2+) as a cofactor. Mn(2+) is required as a cofactor.

It is found in the mitochondrion inner membrane. It localises to the endoplasmic reticulum membrane. It carries out the reaction a sphingomyelin + H2O = phosphocholine + an N-acylsphing-4-enine + H(+). The catalysed reaction is N-(hexadecanoyl)-sphing-4-enine-1-phosphocholine + H2O = N-hexadecanoylsphing-4-enine + phosphocholine + H(+). Its pathway is lipid metabolism; sphingolipid metabolism. Its activity is regulated as follows. Activated by the phospholipids cardiolipin, phosphatidylserine, and phosphatidylethanolamine. Strongest activation with cardiolipin. Functionally, catalyzes the hydrolysis of membrane sphingomyelin to form phosphorylcholine and ceramide. The chain is Sphingomyelin phosphodiesterase 5 from Danio rerio (Zebrafish).